Reading from the N-terminus, the 139-residue chain is Small ribosomal subunit protein uS12 (139 aa).

3-methylthioaspartic acid is present on Asp-102.

This sequence belongs to the universal ribosomal protein uS12 family. Part of the 30S ribosomal subunit. Contacts proteins S8 and S17. May interact with IF1 in the 30S initiation complex.

Its function is as follows. With S4 and S5 plays an important role in translational accuracy. In terms of biological role, interacts with and stabilizes bases of the 16S rRNA that are involved in tRNA selection in the A site and with the mRNA backbone. Located at the interface of the 30S and 50S subunits, it traverses the body of the 30S subunit contacting proteins on the other side and probably holding the rRNA structure together. The combined cluster of proteins S8, S12 and S17 appears to hold together the shoulder and platform of the 30S subunit. This chain is Small ribosomal subunit protein uS12, found in Phytoplasma australiense.